The chain runs to 227 residues: tRNA (guanine-N(1)-)-methyltransferase (227 aa).

S-adenosyl-L-methionine-binding positions include G107 and 127-132 (LGDFIL).

The protein belongs to the RNA methyltransferase TrmD family. Homodimer.

It localises to the cytoplasm. It carries out the reaction guanosine(37) in tRNA + S-adenosyl-L-methionine = N(1)-methylguanosine(37) in tRNA + S-adenosyl-L-homocysteine + H(+). In terms of biological role, specifically methylates guanosine-37 in various tRNAs. This is tRNA (guanine-N(1)-)-methyltransferase from Mesomycoplasma hyopneumoniae (strain 7448) (Mycoplasma hyopneumoniae).